A 500-amino-acid chain; its full sequence is NAD(P)H-quinone oxidoreductase chain 4, chloroplastic (500 aa).

The next 14 membrane-spanning stretches (helical) occupy residues 4–24 (FPWLTILVVLPIFAGSLIFFL), 37–57 (ISICLLEFLLMTYAFCYHFQL), 87–107 (VGSILLTGFITTLATLAAWPV), 113–130 (LFYFLMLAMYSGQIGLFS), 134–154 (LLLFFIMWELELIPVYLLLSM), 167–187 (FILYTAGGSIFFLIGVLGMGL), 211–231 (ILLYFGFLIAYAVKLPIIPLH), 242–262 (HYSTCMLLAGILLKMGAYGLI), 272–292 (AHYLFSPWLVIIGAIQIIYAA), 313–333 (MGFIIIGIGSITNIGLNGAIL), 334–354 (QILSHGFIGATLFFLAGTASD), 386–406 (LALPGMSGFVAELVVFFGLIT), 417–437 (LITFVMAIGMILTPIYLLSML), and 462–482 (LFILICIFLPVIGIGIYPDLV).

This sequence belongs to the complex I subunit 4 family.

The protein resides in the plastid. It is found in the chloroplast thylakoid membrane. It catalyses the reaction a plastoquinone + NADH + (n+1) H(+)(in) = a plastoquinol + NAD(+) + n H(+)(out). The enzyme catalyses a plastoquinone + NADPH + (n+1) H(+)(in) = a plastoquinol + NADP(+) + n H(+)(out). In Agrostis stolonifera (Creeping bentgrass), this protein is NAD(P)H-quinone oxidoreductase chain 4, chloroplastic.